The primary structure comprises 483 residues: Glutamyl-tRNA(Gln) amidotransferase subunit A (483 aa).

Active-site charge relay system residues include lysine 76 and serine 151. Residue serine 175 is the Acyl-ester intermediate of the active site.

This sequence belongs to the amidase family. GatA subfamily. Heterotrimer of A, B and C subunits.

The catalysed reaction is L-glutamyl-tRNA(Gln) + L-glutamine + ATP + H2O = L-glutaminyl-tRNA(Gln) + L-glutamate + ADP + phosphate + H(+). Its function is as follows. Allows the formation of correctly charged Gln-tRNA(Gln) through the transamidation of misacylated Glu-tRNA(Gln) in organisms which lack glutaminyl-tRNA synthetase. The reaction takes place in the presence of glutamine and ATP through an activated gamma-phospho-Glu-tRNA(Gln). The polypeptide is Glutamyl-tRNA(Gln) amidotransferase subunit A (Pseudomonas putida (strain W619)).